The following is a 477-amino-acid chain: UDP-N-acetylmuramate--L-alanine ligase (477 aa).

112–118 (GAHGKTT) contributes to the ATP binding site.

The protein belongs to the MurCDEF family.

It is found in the cytoplasm. It carries out the reaction UDP-N-acetyl-alpha-D-muramate + L-alanine + ATP = UDP-N-acetyl-alpha-D-muramoyl-L-alanine + ADP + phosphate + H(+). It participates in cell wall biogenesis; peptidoglycan biosynthesis. Cell wall formation. In Acidovorax ebreus (strain TPSY) (Diaphorobacter sp. (strain TPSY)), this protein is UDP-N-acetylmuramate--L-alanine ligase.